Reading from the N-terminus, the 205-residue chain is DNA-directed RNA polymerase RPB5 homolog (205 aa).

This sequence belongs to the archaeal RpoH/eukaryotic RPB5 RNA polymerase subunit family. In terms of assembly, part of the viral DNA-directed RNA polymerase that consists of 8 polII-like subunits (RPB1, RPB2, RPB3, RPB5, RPB6, RPB7, RPB9, RPB10), a capping enzyme and a termination factor.

Its subcellular location is the host cytoplasm. It is found in the virion. Component of the DNA-directed RNA polymerase (RNAP) that catalyzes the transcription in the cytoplasm of viral DNA into RNA using the four ribonucleoside triphosphates as substrates. The polypeptide is DNA-directed RNA polymerase RPB5 homolog (Ornithodoros (relapsing fever ticks)).